We begin with the raw amino-acid sequence, 439 residues long: Probable aspartic-type endopeptidase AFUA_3G01220 (439 aa).

Residues 1–20 form the signal peptide; the sequence is MHFSIGSLFLYLIASASCTA. A disordered region spans residues 31–50; it reads RTPFTTSTSKPSAFTNPSTD. Residues 32 to 45 are compositionally biased toward low complexity; the sequence is TPFTTSTSKPSAFT. Residues 95–436 enclose the Peptidase A1 domain; sequence FATSINIGNQ…DVGAAEMRFA (342 aa). Asn103 carries N-linked (GlcNAc...) asparagine glycosylation. The active site involves Asp111. 7 N-linked (GlcNAc...) asparagine glycosylation sites follow: Asn149, Asn178, Asn187, Asn253, Asn256, Asn276, and Asn308. Asp323 is an active-site residue. N-linked (GlcNAc...) asparagine glycans are attached at residues Asn361 and Asn394.

Belongs to the peptidase A1 family.

Its subcellular location is the secreted. Functionally, probable aspartic-type endopeptidase which contributes to virulence. The polypeptide is Probable aspartic-type endopeptidase AFUA_3G01220 (Aspergillus fumigatus (strain ATCC MYA-4609 / CBS 101355 / FGSC A1100 / Af293) (Neosartorya fumigata)).